Consider the following 654-residue polypeptide: Acetyl-coenzyme A synthetase (654 aa).

CoA-binding positions include 190–193 (RGGK) and Thr-313. ATP-binding positions include 389–391 (GEP), 413–418 (DTWWQT), Asp-504, and Arg-519. A CoA-binding site is contributed by Ser-527. Residue Arg-530 participates in ATP binding. Val-541 and Val-546 together coordinate Mg(2+). Lys-613 bears the N6-acetyllysine mark.

It belongs to the ATP-dependent AMP-binding enzyme family. Requires Mg(2+) as cofactor. In terms of processing, acetylated. Deacetylation by the SIR2-homolog deacetylase activates the enzyme.

The catalysed reaction is acetate + ATP + CoA = acetyl-CoA + AMP + diphosphate. In terms of biological role, catalyzes the conversion of acetate into acetyl-CoA (AcCoA), an essential intermediate at the junction of anabolic and catabolic pathways. AcsA undergoes a two-step reaction. In the first half reaction, AcsA combines acetate with ATP to form acetyl-adenylate (AcAMP) intermediate. In the second half reaction, it can then transfer the acetyl group from AcAMP to the sulfhydryl group of CoA, forming the product AcCoA. The sequence is that of Acetyl-coenzyme A synthetase from Leptospira borgpetersenii serovar Hardjo-bovis (strain L550).